We begin with the raw amino-acid sequence, 337 residues long: GTP 3',8-cyclase (337 aa).

In terms of domain architecture, Radical SAM core spans 17–243 (PFQRQYYYLR…HKSHTDGPAK (227 aa)). Arginine 26 lines the GTP pocket. Cysteine 33 and cysteine 37 together coordinate [4Fe-4S] cluster. S-adenosyl-L-methionine is bound at residue tyrosine 39. Position 40 (cysteine 40) interacts with [4Fe-4S] cluster. Residue arginine 76 participates in GTP binding. Residue glycine 80 coordinates S-adenosyl-L-methionine. Position 107 (threonine 107) interacts with GTP. Serine 131 is an S-adenosyl-L-methionine binding site. Lysine 168 is a GTP binding site. Methionine 202 provides a ligand contact to S-adenosyl-L-methionine. 2 residues coordinate [4Fe-4S] cluster: cysteine 265 and cysteine 268. 270-272 (RLR) is a GTP binding site. [4Fe-4S] cluster is bound at residue cysteine 282.

This sequence belongs to the radical SAM superfamily. MoaA family. Monomer and homodimer. Requires [4Fe-4S] cluster as cofactor.

It carries out the reaction GTP + AH2 + S-adenosyl-L-methionine = (8S)-3',8-cyclo-7,8-dihydroguanosine 5'-triphosphate + 5'-deoxyadenosine + L-methionine + A + H(+). Its pathway is cofactor biosynthesis; molybdopterin biosynthesis. Catalyzes the cyclization of GTP to (8S)-3',8-cyclo-7,8-dihydroguanosine 5'-triphosphate. The sequence is that of GTP 3',8-cyclase from Haemophilus influenzae (strain ATCC 51907 / DSM 11121 / KW20 / Rd).